A 704-amino-acid polypeptide reads, in one-letter code: Eukaryotic translation initiation factor 2-alpha kinase 1 (704 aa).

A Protein kinase domain is found at Phe224–Val667. Residues Leu230 to Val238 and Lys253 each bind ATP. The active-site Proton acceptor is the Asp491.

This sequence belongs to the protein kinase superfamily. Ser/Thr protein kinase family. GCN2 subfamily. In terms of processing, autophosphorylated.

It carries out the reaction L-seryl-[protein] + ATP = O-phospho-L-seryl-[protein] + ADP + H(+). The enzyme catalyses L-threonyl-[protein] + ATP = O-phospho-L-threonyl-[protein] + ADP + H(+). Mediates down-regulation of protein synthesis in response to stress conditions by the phosphorylation of the alpha subunit of eIF-2 (tif211) on 'Ser-52'. Protein synthesis is inhibited at the level of initiation. Activity is inhibited in the presence of heme. In Schizosaccharomyces pombe (strain 972 / ATCC 24843) (Fission yeast), this protein is Eukaryotic translation initiation factor 2-alpha kinase 1 (hri1).